Here is a 77-residue protein sequence, read N- to C-terminus: U14-theraphotoxin-Cg1c (77 aa).

The signal sequence occupies residues 1-21; that stretch reads MNTSDPPAVLRIAAITLLCTA. Residues 22–49 constitute a propeptide that is removed on maturation; sequence SESVEQNPLIPFENAVLGSYAKMASEKR. Intrachain disulfides connect Cys50-Cys64 and Cys57-Cys69.

It belongs to the neurotoxin 10 (Hwtx-1) family. 65 (Jztx-21) subfamily. Expressed by the venom gland.

It localises to the secreted. In terms of biological role, probable ion channel inhibitor. The sequence is that of U14-theraphotoxin-Cg1c from Chilobrachys guangxiensis (Chinese earth tiger tarantula).